The following is a 347-amino-acid chain: Globoside alpha-1,3-N-acetylgalactosaminyltransferase 1 (347 aa).

At 1 to 6 (MTRPRL) the chain is on the cytoplasmic side. The chain crosses the membrane as a helical; Signal-anchor for type II membrane protein span at residues 7 to 27 (AQGLAFFLLGGTGLWVLWKFI). The Lumenal portion of the chain corresponds to 28–347 (KDWLLVSYIP…VKKNANWLRT (320 aa)). N-linked (GlcNAc...) asparagine glycosylation occurs at N108. Residues 116-121 (FAVGKY), 206-208 (DVD), and 228-231 (HPGY) contribute to the substrate site. Residues D206 and D208 each contribute to the Mn(2+) site. The active-site Nucleophile is E298.

It belongs to the glycosyltransferase 6 family. The cofactor is Mn(2+).

The protein resides in the golgi apparatus membrane. It carries out the reaction a globoside Gb4Cer (d18:1(4E)) + UDP-N-acetyl-alpha-D-galactosamine = a globoside Forssman (d18:1(4E)) + UDP + H(+). It catalyses the reaction a globoside Gb4Cer + UDP-N-acetyl-alpha-D-galactosamine = a globoside IV3GalNAc-Gb4Cer + UDP + H(+). It functions in the pathway protein modification; protein glycosylation. Its function is as follows. Catalyzes the formation of Forssman glycolipid via the addition of N-acetylgalactosamine (GalNAc) in alpha-1,3-linkage to GalNAcb-1,3Gala-1,4Galb-1,4GlcCer (Gb4Cer). Forssman glycolipid (also called Forssman antigen; FG) probably serves for adherence of some pathogens. Conversely, it diminishes Shiga toxins susceptibility. The protein is Globoside alpha-1,3-N-acetylgalactosaminyltransferase 1 of Mus musculus (Mouse).